A 1076-amino-acid polypeptide reads, in one-letter code: Carbamoyl phosphate synthase large chain (1076 aa).

Positions Met1–Glu403 are carboxyphosphate synthetic domain. ATP-binding residues include Arg129, Arg169, Gly175, Gly176, Glu208, Leu210, Glu215, Gly241, Val242, His243, Gln285, and Glu299. Residues Asp133–Val328 form the ATP-grasp 1 domain. Mg(2+) is bound by residues Gln285, Glu299, and Asn301. Residues Gln285, Glu299, and Asn301 each coordinate Mn(2+). The tract at residues Thr404–Ala553 is oligomerization domain. Positions Glu554–Gly935 are carbamoyl phosphate synthetic domain. The 192-residue stretch at Gln678 to Ala869 folds into the ATP-grasp 2 domain. 10 residues coordinate ATP: Arg714, His753, Leu755, Glu760, Gly785, Val786, His787, Ser788, Gln828, and Glu840. Residues Gln828, Glu840, and Asn842 each contribute to the Mg(2+) site. Mn(2+) is bound by residues Gln828, Glu840, and Asn842. One can recognise an MGS-like domain in the interval Glu936–Gln1076. The allosteric domain stretch occupies residues Glu936–Gln1076.

The protein belongs to the CarB family. Composed of two chains; the small (or glutamine) chain promotes the hydrolysis of glutamine to ammonia, which is used by the large (or ammonia) chain to synthesize carbamoyl phosphate. Tetramer of heterodimers (alpha,beta)4. The cofactor is Mg(2+). Requires Mn(2+) as cofactor.

It carries out the reaction hydrogencarbonate + L-glutamine + 2 ATP + H2O = carbamoyl phosphate + L-glutamate + 2 ADP + phosphate + 2 H(+). The catalysed reaction is hydrogencarbonate + NH4(+) + 2 ATP = carbamoyl phosphate + 2 ADP + phosphate + 2 H(+). It functions in the pathway amino-acid biosynthesis; L-arginine biosynthesis; carbamoyl phosphate from bicarbonate: step 1/1. Its pathway is pyrimidine metabolism; UMP biosynthesis via de novo pathway; (S)-dihydroorotate from bicarbonate: step 1/3. In terms of biological role, large subunit of the glutamine-dependent carbamoyl phosphate synthetase (CPSase). CPSase catalyzes the formation of carbamoyl phosphate from the ammonia moiety of glutamine, carbonate, and phosphate donated by ATP, constituting the first step of 2 biosynthetic pathways, one leading to arginine and/or urea and the other to pyrimidine nucleotides. The large subunit (synthetase) binds the substrates ammonia (free or transferred from glutamine from the small subunit), hydrogencarbonate and ATP and carries out an ATP-coupled ligase reaction, activating hydrogencarbonate by forming carboxy phosphate which reacts with ammonia to form carbamoyl phosphate. This is Carbamoyl phosphate synthase large chain from Halomonas eurihalina.